Reading from the N-terminus, the 426-residue chain is Serine--tRNA ligase (426 aa).

Position 233–235 (233–235 (TSE)) interacts with L-serine. 264 to 266 (RSE) serves as a coordination point for ATP. Glu287 contacts L-serine. 351 to 354 (EISS) lines the ATP pocket. Ser387 lines the L-serine pocket.

The protein belongs to the class-II aminoacyl-tRNA synthetase family. Type-1 seryl-tRNA synthetase subfamily. Homodimer. The tRNA molecule binds across the dimer.

The protein localises to the cytoplasm. It catalyses the reaction tRNA(Ser) + L-serine + ATP = L-seryl-tRNA(Ser) + AMP + diphosphate + H(+). The enzyme catalyses tRNA(Sec) + L-serine + ATP = L-seryl-tRNA(Sec) + AMP + diphosphate + H(+). It functions in the pathway aminoacyl-tRNA biosynthesis; selenocysteinyl-tRNA(Sec) biosynthesis; L-seryl-tRNA(Sec) from L-serine and tRNA(Sec): step 1/1. Functionally, catalyzes the attachment of serine to tRNA(Ser). Is also able to aminoacylate tRNA(Sec) with serine, to form the misacylated tRNA L-seryl-tRNA(Sec), which will be further converted into selenocysteinyl-tRNA(Sec). This is Serine--tRNA ligase from Xylella fastidiosa (strain 9a5c).